A 101-amino-acid chain; its full sequence is Apolipoprotein C-II (101 aa).

The signal sequence occupies residues 1 to 22 (MGARHLLALLLVLLVLGFEVQG). The segment at 66 to 74 (TMDEKIRDM) is lipid binding. A lipoprotein lipase cofactor region spans residues 78–101 (STAAVSTYVGIFTDQLLSLLKGED).

It belongs to the apolipoprotein C2 family. Proapolipoprotein C-II is synthesized as a sialic acid containing glycoprotein which is subsequently desialylated prior to its proteolytic processing. In terms of processing, proapolipoprotein C-II, the major form found in plasma undergoes proteolytic cleavage of its N-terminal hexapeptide to generate apolipoprotein C-II, which occurs as the minor form in plasma.

The protein localises to the secreted. Its function is as follows. Component of chylomicrons, very low-density lipoproteins (VLDL), low-density lipoproteins (LDL), and high-density lipoproteins (HDL) in plasma. Plays an important role in lipoprotein metabolism as an activator of lipoprotein lipase. Both proapolipoprotein C-II and apolipoprotein C-II can activate lipoprotein lipase. This Tapirus terrestris (Lowland tapir) protein is Apolipoprotein C-II (APOC2).